A 239-amino-acid polypeptide reads, in one-letter code: Ribosomal RNA small subunit methyltransferase G (239 aa).

Residues glycine 78, phenylalanine 83, alanine 129–glutamate 130, and arginine 148 each bind S-adenosyl-L-methionine.

This sequence belongs to the methyltransferase superfamily. RNA methyltransferase RsmG family.

It is found in the cytoplasm. Functionally, specifically methylates the N7 position of a guanine in 16S rRNA. The chain is Ribosomal RNA small subunit methyltransferase G from Clostridium tetani (strain Massachusetts / E88).